The primary structure comprises 383 residues: S-adenosylmethionine synthase (383 aa).

His-15 is an ATP binding site. Asp-17 is a Mg(2+) binding site. Glu-43 serves as a coordination point for K(+). L-methionine contacts are provided by Glu-56 and Gln-99. Residues 99 to 109 (QSPDINQGVDR) are flexible loop. ATP-binding positions include 164-166 (DAK), 230-231 (RF), Asp-239, 245-246 (RK), Ala-262, and Lys-266. Asp-239 lines the L-methionine pocket. Lys-270 lines the L-methionine pocket.

Belongs to the AdoMet synthase family. Homotetramer; dimer of dimers. The cofactor is Mg(2+). Requires K(+) as cofactor.

The protein resides in the cytoplasm. It carries out the reaction L-methionine + ATP + H2O = S-adenosyl-L-methionine + phosphate + diphosphate. Its pathway is amino-acid biosynthesis; S-adenosyl-L-methionine biosynthesis; S-adenosyl-L-methionine from L-methionine: step 1/1. In terms of biological role, catalyzes the formation of S-adenosylmethionine (AdoMet) from methionine and ATP. The overall synthetic reaction is composed of two sequential steps, AdoMet formation and the subsequent tripolyphosphate hydrolysis which occurs prior to release of AdoMet from the enzyme. The sequence is that of S-adenosylmethionine synthase from Pseudoalteromonas translucida (strain TAC 125).